A 317-amino-acid polypeptide reads, in one-letter code: Mitochondrial thiamine pyrophosphate carrier 1 (317 aa).

Solcar repeat units lie at residues 12 to 110 (GTRR…TTQV), 120 to 206 (PPAL…LRPV), and 214 to 309 (PFGS…SLKL). Helical transmembrane passes span 17–35 (VVLS…VAPL), 91–107 (LMYV…YRTT), 126–146 (FVSG…LDLL), 181–198 (GCSA…LFFA), 220–240 (AAAG…LDLV), and 284–301 (GLTV…ITMW).

It belongs to the mitochondrial carrier (TC 2.A.29) family.

The protein resides in the mitochondrion inner membrane. Functionally, mitochondrial transporter that mediates uptake of thiamine pyrophosphate (ThPP) into mitochondria. This is Mitochondrial thiamine pyrophosphate carrier 1 (tpc1) from Neosartorya fischeri (strain ATCC 1020 / DSM 3700 / CBS 544.65 / FGSC A1164 / JCM 1740 / NRRL 181 / WB 181) (Aspergillus fischerianus).